The chain runs to 152 residues: Nucleoside diphosphate kinase (152 aa).

K9, F57, R85, T91, R102, and N112 together coordinate ATP. H115 acts as the Pros-phosphohistidine intermediate in catalysis.

It belongs to the NDK family. In terms of assembly, homotetramer. Mg(2+) is required as a cofactor.

Its subcellular location is the cytoplasm. The enzyme catalyses a 2'-deoxyribonucleoside 5'-diphosphate + ATP = a 2'-deoxyribonucleoside 5'-triphosphate + ADP. It catalyses the reaction a ribonucleoside 5'-diphosphate + ATP = a ribonucleoside 5'-triphosphate + ADP. In terms of biological role, major role in the synthesis of nucleoside triphosphates other than ATP. The ATP gamma phosphate is transferred to the NDP beta phosphate via a ping-pong mechanism, using a phosphorylated active-site intermediate. The polypeptide is Nucleoside diphosphate kinase (Rhodopirellula baltica (strain DSM 10527 / NCIMB 13988 / SH1)).